The sequence spans 411 residues: LL-diaminopimelate aminotransferase (411 aa).

2 residues coordinate substrate: Tyr16 and Gly43. Pyridoxal 5'-phosphate contacts are provided by residues Tyr73, 109–110, Tyr133, Asn188, Tyr219, and 247–249; these read AK and SFS. Lys110, Tyr133, and Asn188 together coordinate substrate. Residue Lys250 is modified to N6-(pyridoxal phosphate)lysine. Pyridoxal 5'-phosphate contacts are provided by Arg258 and Asn293. Residues Asn293 and Arg389 each contribute to the substrate site.

Belongs to the class-I pyridoxal-phosphate-dependent aminotransferase family. LL-diaminopimelate aminotransferase subfamily. As to quaternary structure, homodimer. It depends on pyridoxal 5'-phosphate as a cofactor.

It carries out the reaction (2S,6S)-2,6-diaminopimelate + 2-oxoglutarate = (S)-2,3,4,5-tetrahydrodipicolinate + L-glutamate + H2O + H(+). It functions in the pathway amino-acid biosynthesis; L-lysine biosynthesis via DAP pathway; LL-2,6-diaminopimelate from (S)-tetrahydrodipicolinate (aminotransferase route): step 1/1. Functionally, involved in the synthesis of meso-diaminopimelate (m-DAP or DL-DAP), required for both lysine and peptidoglycan biosynthesis. Catalyzes the direct conversion of tetrahydrodipicolinate to LL-diaminopimelate. The chain is LL-diaminopimelate aminotransferase from Methanobrevibacter smithii (strain ATCC 35061 / DSM 861 / OCM 144 / PS).